The chain runs to 180 residues: Hypoxanthine-guanine phosphoribosyltransferase (180 aa).

The diphosphate site is built by K43 and G44. Mg(2+)-binding residues include E99 and D100. Catalysis depends on D103, which acts as the Proton acceptor. GMP-binding positions include K131, 152–153, and D159; that span reads FI. Position 165 (R165) interacts with diphosphate.

Belongs to the purine/pyrimidine phosphoribosyltransferase family. Requires Mg(2+) as cofactor.

The protein resides in the cytoplasm. It carries out the reaction IMP + diphosphate = hypoxanthine + 5-phospho-alpha-D-ribose 1-diphosphate. It catalyses the reaction GMP + diphosphate = guanine + 5-phospho-alpha-D-ribose 1-diphosphate. It participates in purine metabolism; IMP biosynthesis via salvage pathway; IMP from hypoxanthine: step 1/1. It functions in the pathway purine metabolism; GMP biosynthesis via salvage pathway; GMP from guanine: step 1/1. Purine salvage pathway enzyme that catalyzes the transfer of the ribosyl-5-phosphate group from 5-phospho-alpha-D-ribose 1-diphosphate (PRPP) to the N9 position of the 6-oxopurines hypoxanthine and guanine to form the corresponding ribonucleotides IMP (inosine 5'-monophosphate) and GMP (guanosine 5'-monophosphate), with the release of PPi. The chain is Hypoxanthine-guanine phosphoribosyltransferase (hpt) from Streptococcus agalactiae serotype III (strain NEM316).